A 403-amino-acid polypeptide reads, in one-letter code: Argininosuccinate synthase (403 aa).

ATP contacts are provided by residues 13–21 and alanine 40; that span reads AYSGGLDTS. The L-citrulline site is built by tyrosine 91 and serine 96. ATP is bound at residue glycine 121. Threonine 123, asparagine 127, and aspartate 128 together coordinate L-aspartate. Asparagine 127 is a binding site for L-citrulline. Residues arginine 131, serine 180, serine 189, glutamate 265, and tyrosine 277 each coordinate L-citrulline.

This sequence belongs to the argininosuccinate synthase family. Type 1 subfamily. In terms of assembly, homotetramer.

It localises to the cytoplasm. It carries out the reaction L-citrulline + L-aspartate + ATP = 2-(N(omega)-L-arginino)succinate + AMP + diphosphate + H(+). Its pathway is amino-acid biosynthesis; L-arginine biosynthesis; L-arginine from L-ornithine and carbamoyl phosphate: step 2/3. This chain is Argininosuccinate synthase, found in Leptospira interrogans serogroup Icterohaemorrhagiae serovar copenhageni (strain Fiocruz L1-130).